We begin with the raw amino-acid sequence, 76 residues long: Acyl carrier protein (76 aa).

One can recognise a Carrier domain in the interval 1-75 (MVFEKIKALI…DIVFYITKNT (75 aa)). S35 is modified (O-(pantetheine 4'-phosphoryl)serine).

Belongs to the acyl carrier protein (ACP) family. In terms of processing, 4'-phosphopantetheine is transferred from CoA to a specific serine of apo-ACP by AcpS. This modification is essential for activity because fatty acids are bound in thioester linkage to the sulfhydryl of the prosthetic group.

The protein resides in the cytoplasm. It functions in the pathway lipid metabolism; fatty acid biosynthesis. Carrier of the growing fatty acid chain in fatty acid biosynthesis. This is Acyl carrier protein from Onion yellows phytoplasma (strain OY-M).